Consider the following 169-residue polypeptide: Small ribosomal subunit protein bS18c (169 aa).

The segment at 1 to 61 (MYTSKQPFLK…RRPRIGPGDR (61 aa)) is disordered. A compositionally biased stretch (basic residues) spans 27–55 (QTFRKSKQTFRKFKQPFRKSKQPFRRRPR).

The protein belongs to the bacterial ribosomal protein bS18 family. As to quaternary structure, part of the 30S ribosomal subunit.

The protein localises to the plastid. The protein resides in the chloroplast. In Agrostis stolonifera (Creeping bentgrass), this protein is Small ribosomal subunit protein bS18c.